The primary structure comprises 406 residues: Tyrosine--tRNA ligase (406 aa).

L-tyrosine is bound at residue Tyr35. A 'HIGH' region motif is present at residues 40-49; it reads ATSASLHIGH. Residues Tyr167 and Gln171 each contribute to the L-tyrosine site. Positions 227-231 match the 'KMSKS' region motif; it reads KMGKS. Lys230 contacts ATP. Residues 341 to 405 form the S4 RNA-binding domain; sequence ILLVDLMVLA…IGKKKILRIV (65 aa).

The protein belongs to the class-I aminoacyl-tRNA synthetase family. TyrS type 1 subfamily. Homodimer.

Its subcellular location is the cytoplasm. The catalysed reaction is tRNA(Tyr) + L-tyrosine + ATP = L-tyrosyl-tRNA(Tyr) + AMP + diphosphate + H(+). Its function is as follows. Catalyzes the attachment of tyrosine to tRNA(Tyr) in a two-step reaction: tyrosine is first activated by ATP to form Tyr-AMP and then transferred to the acceptor end of tRNA(Tyr). The protein is Tyrosine--tRNA ligase of Borrelia recurrentis (strain A1).